The primary structure comprises 390 residues: Cathepsin D (390 aa).

Residues 1-44 (VIRIPLHKFTSIRRTMSEAAGXVXXLIAKGPISKYATGEPAVRQ) constitute a propeptide, activation peptide. One can recognise a Peptidase A1 domain in the interval 59–385 (YYGEIGIGTP…DRDQNRVGLA (327 aa)). Intrachain disulfides connect cysteine 71–cysteine 140 and cysteine 90–cysteine 97. Aspartate 77 is a catalytic residue. 2 N-linked (GlcNAc...) asparagine glycosylation sites follow: asparagine 114 and asparagine 241. A disulfide bridge connects residues cysteine 264 and cysteine 268. Aspartate 273 is a catalytic residue. A disulfide bond links cysteine 307 and cysteine 344.

Belongs to the peptidase A1 family. As to quaternary structure, consists of a light chain and a heavy chain. Interacts with ADAM30; this leads to activation of CTSD. Interacts with GRN; stabilizes CTSD; increases its proteolytic activity. In terms of processing, N- and O-glycosylated. Post-translationally, undergoes proteolytic cleavage and activation by ADAM30.

The protein localises to the lysosome. Its subcellular location is the melanosome. It is found in the secreted. It localises to the extracellular space. The enzyme catalyses Specificity similar to, but narrower than, that of pepsin A. Does not cleave the 4-Gln-|-His-5 bond in B chain of insulin.. Acid protease active in intracellular protein breakdown. Plays a role in APP processing following cleavage and activation by ADAM30 which leads to APP degradation. The chain is Cathepsin D (CTSD) from Bos taurus (Bovine).